Reading from the N-terminus, the 141-residue chain is Large ribosomal subunit protein uL11 (141 aa).

This sequence belongs to the universal ribosomal protein uL11 family. In terms of assembly, part of the ribosomal stalk of the 50S ribosomal subunit. Interacts with L10 and the large rRNA to form the base of the stalk. L10 forms an elongated spine to which L12 dimers bind in a sequential fashion forming a multimeric L10(L12)X complex. In terms of processing, one or more lysine residues are methylated.

In terms of biological role, forms part of the ribosomal stalk which helps the ribosome interact with GTP-bound translation factors. This Aliarcobacter butzleri (strain RM4018) (Arcobacter butzleri) protein is Large ribosomal subunit protein uL11.